Consider the following 344-residue polypeptide: Protein BREVIS RADIX (344 aa).

The 56-residue stretch at 139 to 194 (KEWMAQVEPGVHITFASLPTGGNDLKRIRFSREMFDKWQAQRWWGENYDKIVELYN) folds into the BRX 1 domain. Residues 203-286 (LQTPARSDDQ…DPPSMSNASE (84 aa)) form a disordered region. The span at 223-233 (DSARESKDWTP) shows a compositional bias: basic and acidic residues. Over residues 248 to 264 (YGGSSNYGPGSYHGGPP) the composition is skewed to low complexity. Residues 289 to 344 (AEWIEEDEPGVYITIRQLSDGTRELRRVRFSRERFGEVHAKTWWEQNRERIQTQYL) enclose the BRX 2 domain.

Belongs to the BRX family. Homodimer and heterodimer with BRXL1. Interacts with NGA1 and ARF5. In terms of tissue distribution, expressed in the developing protophloem up to the elongation zone in root meristem of young seedlings, in the columella and the phloem vasculature throughout the root and in the phloem vasculature in the shoot. Detected in the shoot meristem and in primordia. Low expression in stomata. Confined to sieve element precursor cells and to protophloem.

The protein resides in the nucleus. The protein localises to the cell membrane. In terms of biological role, acts as a regulator of cell proliferation and elongation in the root and shoot. Regulates roots architecture and primary root protophloem differentiation. BRX, BAM3, and CLE45 act together to regulate the transition of protophloem cells from proliferation to differentiation, thus impinging on postembryonic growth capacity of the root meristem. Probable transcription regulator. Regulated by the auxin response factor ARF5. Polarly localized in vascular cells and subject to endocytic recycling. Required for CPD expression and for correct nuclear auxin response. Mediates cross-talk between the auxin and brassinosteroid pathways. BRX is a target for auxin-induced, proteasome-mediated degradation. This Arabidopsis thaliana (Mouse-ear cress) protein is Protein BREVIS RADIX.